We begin with the raw amino-acid sequence, 1504 residues long: NAC-alpha domain-containing protein 1 (1504 aa).

Disordered stretches follow at residues Lys127 to Trp150, Asp208 to His261, Pro315 to Ser356, Leu396 to Ala436, Asp460 to Gln525, Gly539 to Val565, Val701 to Val812, Asp834 to Ala1064, Pro1099 to Lys1366, and Pro1430 to Pro1467. Over residues Ser342–Ser354 the composition is skewed to low complexity. Over residues Gln398–Val407 the composition is skewed to acidic residues. Composition is skewed to low complexity over residues Ala408–Asp422 and Ser462–Gly475. Residues Ser510 to Gln525 show a composition bias toward polar residues. Positions Pro775–Thr792 are enriched in polar residues. Residues Pro930–Asn939 show a composition bias toward low complexity. The segment covering Ser958–Thr968 has biased composition (polar residues). Over residues Glu989–Arg1005 the composition is skewed to basic and acidic residues. The residue at position 998 (Ser998) is a Phosphoserine. Residues Ser1016 to Ala1031 show a composition bias toward polar residues. Residues Pro1159–Gln1171 show a composition bias toward pro residues. Positions Val1213 to Asn1222 are enriched in polar residues. Ser1268 carries the phosphoserine modification. Residues Ser1354–Val1419 form the NAC-A/B domain. Residues Glu1451 to Gly1464 are compositionally biased toward acidic residues.

It belongs to the NAC-alpha family.

Its subcellular location is the cytoplasm. It localises to the nucleus. May prevent inappropriate targeting of non-secretory polypeptides to the endoplasmic reticulum (ER). May bind to nascent polypeptide chains as they emerge from the ribosome and block their interaction with the signal recognition particle (SRP), which normally targets nascent secretory peptides to the ER. May also reduce the inherent affinity of ribosomes for protein translocation sites in the ER membrane (M sites). The sequence is that of NAC-alpha domain-containing protein 1 (Nacad) from Mus musculus (Mouse).